A 233-amino-acid chain; its full sequence is Large ribosomal subunit protein uL1 (233 aa).

The protein belongs to the universal ribosomal protein uL1 family. Part of the 50S ribosomal subunit.

Functionally, binds directly to 23S rRNA. The L1 stalk is quite mobile in the ribosome, and is involved in E site tRNA release. Its function is as follows. Protein L1 is also a translational repressor protein, it controls the translation of the L11 operon by binding to its mRNA. The sequence is that of Large ribosomal subunit protein uL1 from Aeromonas salmonicida (strain A449).